A 410-amino-acid chain; its full sequence is Aspartic proteinase Asp1 (410 aa).

Residues 1–23 (MTARLALLASLLLLLQLVPPSSA) form the signal peptide. Positions 24–46 (VVLELHGNVYPIGHFFITMNIGD) are cleaved as a propeptide — removed in mature form. The Peptidase A1 domain maps to 38–392 (FFITMNIGDP…DSERSLLGWV (355 aa)). Active-site residues include Asp-56 and Asp-257.

This sequence belongs to the peptidase A1 family.

This is Aspartic proteinase Asp1 (ASP1) from Oryza sativa subsp. japonica (Rice).